The sequence spans 196 residues: Small ribosomal subunit protein uS4m (196 aa).

The S4 RNA-binding domain occupies 88 to 154 (KRLDVILVRL…FKSNIRKNFQ (67 aa)).

This sequence belongs to the universal ribosomal protein uS4 family.

It localises to the mitochondrion. The polypeptide is Small ribosomal subunit protein uS4m (RPS4) (Marchantia polymorpha (Common liverwort)).